We begin with the raw amino-acid sequence, 183 residues long: ATP synthase subunit b, chloroplastic (183 aa).

The chain crosses the membrane as a helical span at residues 25 to 45; it reads DILATNLINLTVVVGVLIFFG.

This sequence belongs to the ATPase B chain family. F-type ATPases have 2 components, F(1) - the catalytic core - and F(0) - the membrane proton channel. F(1) has five subunits: alpha(3), beta(3), gamma(1), delta(1), epsilon(1). F(0) has four main subunits: a(1), b(1), b'(1) and c(10-14). The alpha and beta chains form an alternating ring which encloses part of the gamma chain. F(1) is attached to F(0) by a central stalk formed by the gamma and epsilon chains, while a peripheral stalk is formed by the delta, b and b' chains.

The protein localises to the plastid. It is found in the chloroplast thylakoid membrane. In terms of biological role, f(1)F(0) ATP synthase produces ATP from ADP in the presence of a proton or sodium gradient. F-type ATPases consist of two structural domains, F(1) containing the extramembraneous catalytic core and F(0) containing the membrane proton channel, linked together by a central stalk and a peripheral stalk. During catalysis, ATP synthesis in the catalytic domain of F(1) is coupled via a rotary mechanism of the central stalk subunits to proton translocation. Functionally, component of the F(0) channel, it forms part of the peripheral stalk, linking F(1) to F(0). In Saccharum hybrid (Sugarcane), this protein is ATP synthase subunit b, chloroplastic.